Consider the following 233-residue polypeptide: Opacity protein opA67 (233 aa).

Alanine 1 is a signal peptide.

The protein belongs to the opacity porin family.

It localises to the cell outer membrane. Functionally, implicated in a number of adherence functions. OPA proteins are implicated in pathogenesis and are subject to phase variation. The chain is Opacity protein opA67 from Neisseria gonorrhoeae.